Here is a 265-residue protein sequence, read N- to C-terminus: 3-methyl-2-oxobutanoate hydroxymethyltransferase (265 aa).

Mg(2+) is bound by residues Asp-43 and Asp-82. 3-methyl-2-oxobutanoate is bound by residues 43 to 44, Asp-82, and Lys-111; that span reads DS. Glu-113 serves as a coordination point for Mg(2+). The active-site Proton acceptor is the Glu-180.

The protein belongs to the PanB family. As to quaternary structure, homodecamer; pentamer of dimers. Requires Mg(2+) as cofactor.

The protein localises to the cytoplasm. The enzyme catalyses 3-methyl-2-oxobutanoate + (6R)-5,10-methylene-5,6,7,8-tetrahydrofolate + H2O = 2-dehydropantoate + (6S)-5,6,7,8-tetrahydrofolate. Its pathway is cofactor biosynthesis; (R)-pantothenate biosynthesis; (R)-pantoate from 3-methyl-2-oxobutanoate: step 1/2. Its function is as follows. Catalyzes the reversible reaction in which hydroxymethyl group from 5,10-methylenetetrahydrofolate is transferred onto alpha-ketoisovalerate to form ketopantoate. This Francisella tularensis subsp. mediasiatica (strain FSC147) protein is 3-methyl-2-oxobutanoate hydroxymethyltransferase.